The primary structure comprises 116 residues: Ferredoxin (116 aa).

4Fe-4S ferredoxin-type domains follow at residues 2–31 (TYVV…EGER) and 35–64 (FMLV…PESP). The [3Fe-4S] cluster site is built by Cys9 and Cys17. Positions 21, 44, 47, and 50 each coordinate [4Fe-4S] cluster. Position 54 (Cys54) interacts with [3Fe-4S] cluster.

The cofactor is [4Fe-4S] cluster. It depends on [3Fe-4S] cluster as a cofactor.

Functionally, ferredoxins are iron-sulfur proteins that transfer electrons in a wide variety of metabolic reactions. The polypeptide is Ferredoxin (fdxA) (Rickettsia conorii (strain ATCC VR-613 / Malish 7)).